We begin with the raw amino-acid sequence, 510 residues long: Pre-glycoprotein polyprotein GP complex (510 aa).

The N-myristoyl glycine; by host moiety is linked to residue Gly2. The Extracellular portion of the chain corresponds to 2-17 (GQFITLMQSIPEALNM). Residues 18–32 (AFNVALVIVSLLCVT) form a helical membrane-spanning segment. Lys33 is a topological domain (cytoplasmic). Residues 34–53 (GLINLWKCGIIQLLMFLALA) traverse the membrane as a helical segment. Extracellular loops occupy residues 54–58 (GRSCD) and 59–448 (GEYK…ALAD). Zn(2+) is bound at residue Cys57. N-linked (GlcNAc...) asparagine; by host glycosylation is found at Asn75, Asn90, Asn101, Asn112, Asn117, Asn122, Asn133, Asn182, Asn218, and Asn243. Cystine bridges form between Cys87–Cys250, Cys295–Cys308, Cys317–Cys326, and Cys380–Cys401. Asn381, Asn389, Asn406, and Asn411 each carry an N-linked (GlcNAc...) asparagine; by host glycan. Residues 449–469 (LCFWSLVFFTTTVFFQLIGIP) form a helical membrane-spanning segment. At 470–510 (THRHLIGEGCPKPHRLTSNSLCSCGFYKIPKKPFRWVRKGK) the chain is on the cytoplasmic side. Zn(2+) contacts are provided by His471, His473, Cys479, His483, Cys491, and Cys493.

This sequence belongs to the arenaviridae GPC protein family. As to quaternary structure, homotetramer; disulfide-linked. Homotetramer. GP2 homotetramers bind through ionic interactions with GP1 homotetramers to form the GP complex together with the stable signal peptide. The GP-C polyprotein interacts with the host protease MBTPS1/SKI-1 resulting in the polyprotein processing. In terms of processing, specific enzymatic cleavages in vivo yield mature proteins. GP-C polyprotein is cleaved in the endoplasmic reticulum by the host protease MBTPS1. Only cleaved glycoprotein is incorporated into virions. Post-translationally, the SSP remains stably associated with the GP complex following cleavage by signal peptidase and plays crucial roles in the trafficking of GP through the secretory pathway. Myristoylation is necessary for GP2-mediated fusion activity.

The protein resides in the virion membrane. It is found in the host endoplasmic reticulum membrane. It localises to the host Golgi apparatus membrane. Its subcellular location is the host cell membrane. In terms of biological role, class I viral fusion protein that directs fusion of viral and host endosomal membranes, leading to delivery of the nucleocapsid into the cytoplasm. Membrane fusion is mediated by irreversible conformational changes induced upon acidification in the endosome. Its function is as follows. Stable signal peptide (SSP): cleaved and functions as a signal peptide. In addition, it is also retained as the third component of the GP complex. The SSP is required for efficient glycoprotein expression, post-translational maturation cleavage of GP1 and GP2, glycoprotein transport to the cell surface plasma membrane, formation of infectious virus particles, and acid pH-dependent glycoprotein-mediated cell fusion. Functionally, interacts with the host receptor. The polypeptide is Pre-glycoprotein polyprotein GP complex (Pirital mammarenavirus (isolate Rat/Venezuela/VAV-488/1995) (PIRV)).